The chain runs to 185 residues: Phosphatidylglycerophosphatase GEP4, mitochondrial (185 aa).

The Phosphoryl acceptor signature appears at 45–49; the sequence is DKDNC.

Belongs to the GEP4 family.

Its subcellular location is the mitochondrion inner membrane. The catalysed reaction is a 1,2-diacyl-sn-glycero-3-phospho-(1'-sn-glycero-3'-phosphate) + H2O = a 1,2-diacyl-sn-glycero-3-phospho-(1'-sn-glycerol) + phosphate. It functions in the pathway phospholipid metabolism; phosphatidylglycerol biosynthesis; phosphatidylglycerol from CDP-diacylglycerol: step 2/2. Its function is as follows. Phosphatidylglycerophosphatase involved in the biosynthesis of cardiolipin (CL), a unique dimeric phosphoglycerolipid predominantly present in mitochondrial membranes and which has important functions for cellular energy metabolism, mitochondrial dynamics and the initiation of apoptotic pathways. Required for the stability of respiratory chain supercomplexes and for growth at elevated temperature, in presence of ethidium bromide or in absence of prohibitins. This is Phosphatidylglycerophosphatase GEP4, mitochondrial (GEP4) from Saccharomyces cerevisiae (strain ATCC 204508 / S288c) (Baker's yeast).